Here is a 146-residue protein sequence, read N- to C-terminus: MRLHELRPKTNYKKSRKRKGRGMSSGLGKTAGRGHKGQNARTGGGVRPGFEGGQMPLQERLPKRGFTNAFKKEYAIVNVETLNDFEEGTEITPEVLLESKVIKGVKDGIKVLGKGEIDKKITVKAHKFSKQAKEKIEEAGGKVEVI.

The interval 1–62 is disordered; the sequence is MRLHELRPKT…GQMPLQERLP (62 aa). A compositionally biased stretch (basic residues) spans 10 to 21; that stretch reads TNYKKSRKRKGR. Residues 42–52 show a composition bias toward gly residues; sequence TGGGVRPGFEG.

Belongs to the universal ribosomal protein uL15 family. As to quaternary structure, part of the 50S ribosomal subunit.

Binds to the 23S rRNA. This Natranaerobius thermophilus (strain ATCC BAA-1301 / DSM 18059 / JW/NM-WN-LF) protein is Large ribosomal subunit protein uL15.